Consider the following 557-residue polypeptide: Dihydroxy-acid dehydratase (557 aa).

Residue cysteine 50 participates in [2Fe-2S] cluster binding. Position 82 (aspartate 82) interacts with Mg(2+). Cysteine 123 serves as a coordination point for [2Fe-2S] cluster. Residues aspartate 124 and lysine 125 each coordinate Mg(2+). Lysine 125 is modified (N6-carboxylysine). Residue cysteine 195 participates in [2Fe-2S] cluster binding. Glutamate 447 contributes to the Mg(2+) binding site. The active-site Proton acceptor is serine 473.

Belongs to the IlvD/Edd family. In terms of assembly, homodimer. Requires [2Fe-2S] cluster as cofactor. The cofactor is Mg(2+).

It carries out the reaction (2R)-2,3-dihydroxy-3-methylbutanoate = 3-methyl-2-oxobutanoate + H2O. The enzyme catalyses (2R,3R)-2,3-dihydroxy-3-methylpentanoate = (S)-3-methyl-2-oxopentanoate + H2O. It functions in the pathway amino-acid biosynthesis; L-isoleucine biosynthesis; L-isoleucine from 2-oxobutanoate: step 3/4. Its pathway is amino-acid biosynthesis; L-valine biosynthesis; L-valine from pyruvate: step 3/4. Functionally, functions in the biosynthesis of branched-chain amino acids. Catalyzes the dehydration of (2R,3R)-2,3-dihydroxy-3-methylpentanoate (2,3-dihydroxy-3-methylvalerate) into 2-oxo-3-methylpentanoate (2-oxo-3-methylvalerate) and of (2R)-2,3-dihydroxy-3-methylbutanoate (2,3-dihydroxyisovalerate) into 2-oxo-3-methylbutanoate (2-oxoisovalerate), the penultimate precursor to L-isoleucine and L-valine, respectively. The sequence is that of Dihydroxy-acid dehydratase from Metallosphaera sedula (strain ATCC 51363 / DSM 5348 / JCM 9185 / NBRC 15509 / TH2).